A 236-amino-acid polypeptide reads, in one-letter code: uncharacterized protein (236 aa).

This is an uncharacterized protein from Sus scrofa (Pig).